We begin with the raw amino-acid sequence, 256 residues long: Ribosomal RNA small subunit methyltransferase J (256 aa).

S-adenosyl-L-methionine is bound by residues 104–105 (RD), 120–121 (ER), 156–157 (SS), and aspartate 174.

Belongs to the methyltransferase superfamily. RsmJ family.

Its subcellular location is the cytoplasm. The enzyme catalyses guanosine(1516) in 16S rRNA + S-adenosyl-L-methionine = N(2)-methylguanosine(1516) in 16S rRNA + S-adenosyl-L-homocysteine + H(+). Functionally, specifically methylates the guanosine in position 1516 of 16S rRNA. This is Ribosomal RNA small subunit methyltransferase J from Yersinia pseudotuberculosis serotype O:1b (strain IP 31758).